Consider the following 67-residue polypeptide: Large ribosomal subunit protein bL35 (67 aa).

This sequence belongs to the bacterial ribosomal protein bL35 family.

The polypeptide is Large ribosomal subunit protein bL35 (Caldanaerobacter subterraneus subsp. tengcongensis (strain DSM 15242 / JCM 11007 / NBRC 100824 / MB4) (Thermoanaerobacter tengcongensis)).